The sequence spans 406 residues: MTFSVDKVRADFPVLSREVNGLPLAYLDSAASAQKPSQVIDAEAEFYRHGYAAVHRGIHTLSAQATEKMENVRKRASLFINARSAEELVFVRGTTEGINLVANSWGNSNVRAGDNIIISQMEHHANIVPWQMLCARVGAELRVIPLNPDGTLQLETLPTLFDEKTRLLAITHVSNVLGTENPLAEMITLAHQHGAKVLVDGAQAVMHHPVDVQALDCDFYVFSGHKLYGPTGIGILYVKEALLQEMPPWEGGGSMIATVSLSEGTTWTKAPWRFEAGTPNTGGIIGLGAALEYVSALGLNNIAEYEQNLMHYALSQLESVPDLTLYGPQNRLGVIAFNLGKHHAYDVGSFLDNYGIAVRTGHHCAMPLMAYYNVPAMCRASLAMYNTHEEVDRLVTGLQRIHRLLG.

At Lys-226 the chain carries N6-(pyridoxal phosphate)lysine. The Cysteine persulfide intermediate role is filled by Cys-364.

Belongs to the class-V pyridoxal-phosphate-dependent aminotransferase family. Csd subfamily. As to quaternary structure, homodimer. Interacts with SufE and the SufBCD complex composed of SufB, SufC and SufD. The interaction with SufE is required to mediate the direct transfer of the sulfur atom from the S-sulfanylcysteine. Pyridoxal 5'-phosphate is required as a cofactor.

The protein localises to the cytoplasm. The catalysed reaction is (sulfur carrier)-H + L-cysteine = (sulfur carrier)-SH + L-alanine. It catalyses the reaction L-selenocysteine + AH2 = hydrogenselenide + L-alanine + A + H(+). Its pathway is cofactor biosynthesis; iron-sulfur cluster biosynthesis. Functionally, cysteine desulfurases mobilize the sulfur from L-cysteine to yield L-alanine, an essential step in sulfur metabolism for biosynthesis of a variety of sulfur-containing biomolecules. Component of the suf operon, which is activated and required under specific conditions such as oxidative stress and iron limitation. Acts as a potent selenocysteine lyase in vitro, that mobilizes selenium from L-selenocysteine. Selenocysteine lyase activity is however unsure in vivo. The protein is Cysteine desulfurase of Escherichia coli O45:K1 (strain S88 / ExPEC).